An 836-amino-acid polypeptide reads, in one-letter code: General negative regulator of transcription subunit 3 (836 aa).

3 coiled-coil regions span residues 36–68 (NNPS…WQSS), 119–195 (RERR…ANEE), and 255–292 (NTSD…AKNA). A compositionally biased stretch (polar residues) spans 252–267 (EDNNTSDANESLQDIS). 4 disordered regions span residues 252–284 (EDNN…AKKA), 296–391 (AIPV…LKPA), 410–471 (AVEK…NTGA), and 513–532 (NPKS…PENT). Residues 268 to 283 (KLSKKEQRKLEREAKK) show a composition bias toward basic and acidic residues. 3 positions are modified to phosphoserine: Ser303, Ser307, and Ser322. The segment covering 341–386 (SIKSPRSSADNLLPSLQKSPSSATPETPTNVHTHIHQTPNGITGAT) has biased composition (polar residues). Low complexity predominate over residues 418 to 446 (TSASSTISNTSTKTPTTAAATTTSSNANS). Phosphoserine occurs at positions 446 and 450. Composition is skewed to polar residues over residues 447 to 468 (RIGS…QPDN) and 522 to 531 (TTVNQNGPEN). Residue Lys535 forms a Glycyl lysine isopeptide (Lys-Gly) (interchain with G-Cter in ubiquitin) linkage. The disordered stretch occupies residues 537–583 (MEQKEEESPEERNKLQVPTFGVFDDDFESDRDSETEPEEEEQPSTPK). Positions 559–578 (FDDDFESDRDSETEPEEEEQ) are enriched in acidic residues. Residues Ser565 and Ser569 each carry the phosphoserine modification. Thr571 carries the phosphothreonine modification. Position 657 is a phosphoserine (Ser657). A coiled-coil region spans residues 803–831 (NVNDQSNVTLEQQKQEISHGKQLLKQLKQ).

This sequence belongs to the CNOT2/3/5 family. Forms a NOT protein complex that comprises NOT1, NOT2, NOT3, NOT4 and NOT5. Subunit of the 1.0 MDa CCR4-NOT core complex that contains CCR4, CAF1, NOT1, NOT2, NOT3, NOT4, NOT5, CAF40 and CAF130. The core complex probably is part of a less characterized 1.9 MDa CCR4-NOT complex.

The protein localises to the cytoplasm. Its subcellular location is the nucleus. Acts as a component of the CCR4-NOT core complex, which in the nucleus seems to be a general transcription factor, and in the cytoplasm the major mRNA deadenylase involved in mRNA turnover. The NOT protein subcomplex negatively regulates the basal and activated transcription of many genes. Preferentially affects TC-type TATA element-dependent transcription. Could directly or indirectly inhibit component(s) of the general transcription machinery. This Saccharomyces cerevisiae (strain ATCC 204508 / S288c) (Baker's yeast) protein is General negative regulator of transcription subunit 3 (NOT3).